Here is a 251-residue protein sequence, read N- to C-terminus: Insulin-induced gene 1 protein (251 aa).

The Cytoplasmic segment spans residues 1-58 (MQTLEEHCWSCSCTRGRDKKGTRLSTWLAQRAAKAMSSLNSLLSLAYHTLASSEGRSL). Residues 59 to 81 (IRRSLVLFAVGVFLALVLNLLQI) traverse the membrane as a helical segment. Topologically, residues 82–100 (QRNVTLFPEEVIATIFSSA) are extracellular. Residues 101-118 (WWVPPCCGTAAAVVGLLY) traverse the membrane as a helical segment. The Cytoplasmic segment spans residues 119 to 133 (PCIDSHLGEPHKFKR). Residues 134–156 (EWASVMRCIAVFVGINHASAKLD) form a helical membrane-spanning segment. Residues 157–159 (FAN) are Extracellular-facing. The helical transmembrane segment at 160-178 (NVQLSLTLAALSLGLWWTF) threads the bilayer. At 179–183 (DRSRS) the chain is on the cytoplasmic side. A helical transmembrane segment spans residues 184–205 (GLGLGITIAFLATLITQFLVYN). Topologically, residues 206–219 (GVYQYTSPDFLYIR) are extracellular. The helical transmembrane segment at 220–237 (SWLPCIFFSGGVTVGNIG) threads the bilayer. At 238–251 (RQLAMGSSEKTHSD) the chain is on the cytoplasmic side. The KxHxx motif lies at 245 to 251 (SEKTHSD).

The protein belongs to the INSIG family. In terms of assembly, interacts with scap; interaction is direct and only takes place in the presence of sterols; it prevents interaction between scap and the coat protein complex II (COPII). Associates with the SCAP-SREBP complex; association is mediated via its interaction with scap and only takes place in the presence of sterols.

It is found in the endoplasmic reticulum membrane. Its function is as follows. Oxysterol-binding protein that mediates feedback control of cholesterol synthesis by controlling both endoplasmic reticulum to Golgi transport of scap and degradation of hmgcr. Acts as a negative regulator of cholesterol biosynthesis by mediating the retention of the SCAP-SREBP complex in the endoplasmic reticulum, thereby blocking the processing of sterol regulatory element-binding proteins (SREBPs). Binds oxysterol, including 25-hydroxycholesterol, regulating interaction with scap and retention of the SCAP-SREBP complex in the endoplasmic reticulum. In presence of oxysterol, interacts with scap, retaining the SCAP-SREBP complex in the endoplasmic reticulum, thereby preventing scap from escorting SREBPs to the Golgi. Sterol deprivation reduces oxysterol-binding, disrupting the interaction between insig1 and scap, thereby promoting Golgi transport of the SCAP-SREBP complex, followed by processing and nuclear translocation of SREBPs. Also regulates cholesterol synthesis by regulating degradation of hmgcr. This is Insulin-induced gene 1 protein from Xenopus tropicalis (Western clawed frog).